A 303-amino-acid polypeptide reads, in one-letter code: Uridylate-specific endoribonuclease C (303 aa).

The signal sequence occupies residues 1-16; it reads MVYLVFLCLLPSLISG. The EndoU domain maps to 32 to 303; that stretch reads TDAEIQSLAE…KRFVASSYPI (272 aa). Active-site residues include His-181, His-196, and Lys-239. The N-linked (GlcNAc...) asparagine glycan is linked to Asn-287.

It belongs to the ENDOU family. Monomer. Mn(2+) serves as cofactor.

Its subcellular location is the secreted. The catalysed reaction is ribonucleotidyl-uridine-RNA = a 5'-end dephospho-uridine-RNA + a 3'-end 2',3'-cyclophospho-ribonucleotide-RNA. Endoribonuclease that cleaves single-stranded RNAs at 5' of uridylates and releases a product with a 2',3'-cyclic phosphate at the 3'-end. The polypeptide is Uridylate-specific endoribonuclease C (endou-c) (Xenopus laevis (African clawed frog)).